A 245-amino-acid polypeptide reads, in one-letter code: NAD-dependent protein deacylase (245 aa).

Residues Met1–Ile245 enclose the Deacetylase sirtuin-type domain. Gly22–Trp41 provides a ligand contact to NAD(+). Substrate contacts are provided by Tyr66 and Arg69. Position 100-103 (Gln100–Asp103) interacts with NAD(+). His118 functions as the Proton acceptor in the catalytic mechanism. Zn(2+)-binding residues include Cys126, Cys129, Cys146, and Cys149. NAD(+) contacts are provided by residues Gly186–Ser188, Asn212–Glu214, and Met241.

This sequence belongs to the sirtuin family. Class III subfamily. Zn(2+) is required as a cofactor.

The protein localises to the cytoplasm. It carries out the reaction N(6)-acetyl-L-lysyl-[protein] + NAD(+) + H2O = 2''-O-acetyl-ADP-D-ribose + nicotinamide + L-lysyl-[protein]. The catalysed reaction is N(6)-succinyl-L-lysyl-[protein] + NAD(+) + H2O = 2''-O-succinyl-ADP-D-ribose + nicotinamide + L-lysyl-[protein]. In terms of biological role, NAD-dependent lysine deacetylase and desuccinylase that specifically removes acetyl and succinyl groups on target proteins. Modulates the activities of several proteins which are inactive in their acylated form. Deacetylates the N-terminal lysine residue of Alba, the major archaeal chromatin protein and that, in turn, increases Alba's DNA binding affinity, thereby repressing transcription. The protein is NAD-dependent protein deacylase of Aeropyrum pernix (strain ATCC 700893 / DSM 11879 / JCM 9820 / NBRC 100138 / K1).